Reading from the N-terminus, the 529-residue chain is Zinc finger protein 572 (529 aa).

The tract at residues 1–62 is disordered; that stretch reads MEQEKKLLVS…EWSKRHRPQH (62 aa). Glycyl lysine isopeptide (Lys-Gly) (interchain with G-Cter in SUMO2) cross-links involve residues Lys5 and Lys6. Polar residues predominate over residues 26–35; it reads TGDTSMNNLE. Over residues 36–55 the composition is skewed to basic and acidic residues; sequence TVHHNNSKADKLKEKPSEWS. 12 C2H2-type zinc fingers span residues 132–154, 160–182, 188–210, 216–238, 244–266, 272–294, 300–322, 328–350, 384–406, 412–434, 440–462, and 468–490; these read YKCS…QRTH, YKCS…LRMH, YQCG…ERTH, YKCP…HRSH, YECS…QRTH, YKCP…QRTH, YKCL…QRIH, YQCP…QKMH, YRCC…QRTH, YRCS…QRTH, YKCP…RRTH, and YKCT…RKIH.

The protein belongs to the krueppel C2H2-type zinc-finger protein family.

Its subcellular location is the nucleus. Functionally, may be involved in transcriptional regulation. The sequence is that of Zinc finger protein 572 (ZNF572) from Homo sapiens (Human).